Reading from the N-terminus, the 119-residue chain is Holo-[acyl-carrier-protein] synthase (119 aa).

The Mg(2+) site is built by aspartate 8 and glutamate 58.

The protein belongs to the P-Pant transferase superfamily. AcpS family. The cofactor is Mg(2+).

The protein localises to the cytoplasm. It catalyses the reaction apo-[ACP] + CoA = holo-[ACP] + adenosine 3',5'-bisphosphate + H(+). Transfers the 4'-phosphopantetheine moiety from coenzyme A to a Ser of acyl-carrier-protein. The protein is Holo-[acyl-carrier-protein] synthase of Streptococcus thermophilus (strain CNRZ 1066).